The primary structure comprises 209 residues: Uracil phosphoribosyltransferase (209 aa).

5-phospho-alpha-D-ribose 1-diphosphate is bound by residues Arg79, Arg104, and 131–139 (DPMLATGVS). Uracil contacts are provided by residues Ile194 and 199–201 (GDA). Asp200 is a 5-phospho-alpha-D-ribose 1-diphosphate binding site.

Belongs to the UPRTase family. Mg(2+) serves as cofactor.

It carries out the reaction UMP + diphosphate = 5-phospho-alpha-D-ribose 1-diphosphate + uracil. The protein operates within pyrimidine metabolism; UMP biosynthesis via salvage pathway; UMP from uracil: step 1/1. Allosterically activated by GTP. Functionally, catalyzes the conversion of uracil and 5-phospho-alpha-D-ribose 1-diphosphate (PRPP) to UMP and diphosphate. This Thermotoga maritima (strain ATCC 43589 / DSM 3109 / JCM 10099 / NBRC 100826 / MSB8) protein is Uracil phosphoribosyltransferase.